The sequence spans 834 residues: Serine-rich coiled-coil domain-containing protein 2 (834 aa).

Residues 169–212 (PKSQLNGFYGNRSAGSMQRPRANSCATRSSSGESLAQSPDSSKS) are disordered. Residues 192-212 (SCATRSSSGESLAQSPDSSKS) are compositionally biased toward polar residues. At Ser223 the chain carries Phosphoserine. Residues 426-443 (RTRITPEEMSLKEEKHEN) show a composition bias toward basic and acidic residues. 5 disordered regions span residues 426-454 (RTRITPEEMSLKEEKHENGPPQDMFDSPK), 477-509 (CTKHTSGNNLVSPDTDYRAGSSFELSPSDSSDG), 573-628 (NMNR…SPYR), 695-714 (LHDIQLSLPSSPEPEDGDKV), and 780-834 (APSF…RGPQ). Ser452 is subject to Phosphoserine. The span at 497-507 (SSFELSPSDSS) shows a compositional bias: low complexity. 2 stretches are compositionally biased toward basic and acidic residues: residues 573-584 (NMNRFDRPDRNV) and 601-611 (GQEHYHLSHPD). The stretch at 712–749 (DKVYKNEDLLNEIKQLKDEIKKKDEKIQLLELQLATQH) forms a coiled coil. Composition is skewed to polar residues over residues 781–790 (PSFSPWQGSF) and 804–816 (TSSTTAFQQPSQT).

Belongs to the CCSER family.

The protein resides in the cytoplasm. Its subcellular location is the cytoskeleton. Microtubule-binding protein which might play a role in microtubule bundling. This chain is Serine-rich coiled-coil domain-containing protein 2 (CCSER2), found in Homo sapiens (Human).